The sequence spans 177 residues: Probable inosine/xanthosine triphosphatase (177 aa).

The protein belongs to the YjjX NTPase family. Homodimer. Mg(2+) serves as cofactor. Mn(2+) is required as a cofactor.

The enzyme catalyses XTP + H2O = XDP + phosphate + H(+). It carries out the reaction ITP + H2O = IDP + phosphate + H(+). Functionally, phosphatase that hydrolyzes non-canonical purine nucleotides such as XTP and ITP to their respective diphosphate derivatives. Probably excludes non-canonical purines from DNA/RNA precursor pool, thus preventing their incorporation into DNA/RNA and avoiding chromosomal lesions. The sequence is that of Probable inosine/xanthosine triphosphatase from Pyrobaculum islandicum (strain DSM 4184 / JCM 9189 / GEO3).